Here is a 511-residue protein sequence, read N- to C-terminus: Peptide transporter YePEPT (511 aa).

The Cytoplasmic segment spans residues 1-19; the sequence is MQTSTNTPGGRTFFGHPYP. Residues 20-45 form a helical membrane-spanning segment; sequence LSGLFLSEMWERFSFYGIRPLLILFM. Topologically, residues 46–59 are periplasmic; sequence AATVFDGGMGLPRE. The helical transmembrane segment at 60 to 84 threads the bilayer; the sequence is QASAIVGIFAGSMYLAALPGGLLAD. The Cytoplasmic segment spans residues 85–88; that stretch reads NWLG. Residues 89–109 form a helical membrane-spanning segment; it reads QQRAVWYGSILIALGHLSIAL. The Periplasmic segment spans residues 110 to 115; it reads SAFFGN. Residues 116 to 138 form a helical membrane-spanning segment; that stretch reads DLFFIGLVFIVLGTGLFKTCISV. Over 139–149 the chain is Cytoplasmic; it reads MVGTLYKPGDA. A helical transmembrane segment spans residues 150-175; that stretch reads RRDGGFSLFYMGINMGSFIAPLLSGW. At 176–181 the chain is on the periplasmic side; it reads LLRTHG. A helical membrane pass occupies residues 182 to 208; the sequence is WHWGFGIGGIGMLVALLIFRGFAIPAM. The Cytoplasmic segment spans residues 209 to 232; it reads KRYDAEVGLDSSWNKPTNQRQGVG. Residues 233–253 form a helical membrane-spanning segment; it reads RWVTAIMAVVVVIIALISQGV. Residues 254–256 lie on the Periplasmic side of the membrane; the sequence is IPI. Residues 257-279 traverse the membrane as a helical segment; sequence NPVMIASLLVYVIAASVTLYFIY. Residues 280–294 lie on the Cytoplasmic side of the membrane; it reads LFAFAKMSRKDRARL. A helical membrane pass occupies residues 295–321; it reads LVCFILLVSAAFFWSAFEQKPTSFNLF. At 322 to 335 the chain is on the periplasmic side; the sequence is ANDYTDRMVMGFEI. The helical transmembrane segment at 336-357 threads the bilayer; that stretch reads PTVWFQSINALFIILLAPVFSW. Topologically, residues 358–369 are cytoplasmic; sequence AWPALAKKKIQP. A helical transmembrane segment spans residues 370–396; the sequence is SSITKFVIGILCAAAGFAVMMYAAQHV. Residues 397–405 lie on the Periplasmic side of the membrane; it reads LSSGGAGVS. Residues 406–426 traverse the membrane as a helical segment; it reads PLWLVMSILLLTLGELCLSPI. Residues 427-441 are Cytoplasmic-facing; sequence GLATMTLLAPDRMRG. A helical membrane pass occupies residues 442 to 462; it reads QVMGLWFCASSLGNLAAGLIG. Residues 463–471 lie on the Periplasmic side of the membrane; sequence GHVKADQLD. A helical transmembrane segment spans residues 472 to 496; the sequence is MLPTLFARCSIALVICAAVLILLIV. Topologically, residues 497–511 are cytoplasmic; it reads PIRRLMNNTQGQQTA.

It belongs to the major facilitator superfamily. Proton-dependent oligopeptide transporter (POT/PTR) (TC 2.A.17) family.

The protein resides in the cell inner membrane. Transport is inhibited by the proton ionophore carbonyl cyanide m-chlorophenylhydrazone (CCCP). In terms of biological role, mediates the proton-dependent uptake of dipeptides. Shows higher affinity for dipeptides with a negatively charged amino acid residue at the N-terminal position, such as Asp-Ala and Glu-Ala. Also displays specificity for Ala-Ala, Ala-Tyr and Tyr-Ala. This chain is Peptide transporter YePEPT, found in Yersinia enterocolitica subsp. palearctica serotype O:3 (strain YE-P4).